Here is a 432-residue protein sequence, read N- to C-terminus: Probable N-acetylmuramoyl-L-alanine amidase AmiB (432 aa).

Positions 1–20 are cleaved as a signal peptide; sequence MKTKILFFLFFSTFSFSIFA. The 220-residue stretch at 25–244 folds into the MurNAc-LAA domain; it reads IAIDPGHGGK…IAYMIYEGLV (220 aa). 2 LysM domains span residues 292–335 and 385–429; these read IRHI…SIKI and LYHK…KIKL.

It belongs to the N-acetylmuramoyl-L-alanine amidase 3 family.

It localises to the periplasm. It catalyses the reaction Hydrolyzes the link between N-acetylmuramoyl residues and L-amino acid residues in certain cell-wall glycopeptides.. In terms of biological role, cell-wall hydrolase involved in septum cleavage during cell division. The sequence is that of Probable N-acetylmuramoyl-L-alanine amidase AmiB (amiB) from Haemophilus influenzae (strain ATCC 51907 / DSM 11121 / KW20 / Rd).